Consider the following 285-residue polypeptide: MAPPSRRECPFPSRRFPGLFLAALALLLSSRSDACGPPPTFVAMELTSRPKPYYKVGEQVEYDCKKGYHHFAPFLTHTVCDRNHTWLPISDAPCVKKVCHYIPNPAHGQAILANGTYSFGNQLHFICNDGYYLIGKAILYCELKGSDAVWSGRPPICQKILCKPPPTIKNGKHTFSEVDVFEYLDAVTYSCDPAPGPDPFSLVGESTIYCRDSLGWSGDPPECKVVKCRFPVIENGRQTAGFGIKFYYNAAVMFECYEGFHIIGSDTIVCNSNSTWDPPVPKCVK.

Positions 1-34 are cleaved as a signal peptide; that stretch reads MAPPSRRECPFPSRRFPGLFLAALALLLSSRSDA. 4 consecutive Sushi domains span residues 35–96, 97–159, 160–225, and 226–285; these read CGPP…PCVK, KVCH…ICQK, ILCK…ECKV, and VKCR…KCVK. Cystine bridges form between Cys-99-Cys-141, Cys-127-Cys-157, Cys-162-Cys-210, Cys-191-Cys-223, Cys-228-Cys-270, and Cys-256-Cys-283. Asn-114 carries N-linked (GlcNAc...) asparagine glycosylation. O-linked (GalNAc...) threonine glycans are attached at residues Thr-167 and Thr-207.

In terms of assembly, interacts with C3b. Interacts with C4b. Interacts with moesin/MSN. Post-translationally, N-glycosylated. Probably less N-glycosylated in testis. As to expression, present in blood and sperm. Isoform 2, but not isoform 1, is present at the erythrocyte membrane (at protein level).

It localises to the cytoplasmic vesicle. The protein resides in the secretory vesicle. The protein localises to the acrosome inner membrane. Acts as a cofactor for complement factor I, a serine protease which protects autologous cells against complement-mediated injury by cleaving C3b and C4b deposited on host tissue. May be involved in the fusion of the spermatozoa with the oocyte during fertilization. Also acts as a costimulatory factor for T-cells which induces the differentiation of CD4+ into T-regulatory 1 cells. T-regulatory 1 cells suppress immune responses by secreting interleukin-10, and therefore are thought to prevent autoimmunity. The polypeptide is Membrane cofactor protein (CD46) (Saimiri sciureus (Common squirrel monkey)).